The primary structure comprises 422 residues: Synaptotagmin-1 (422 aa).

Topologically, residues 1 to 57 are vesicular; that stretch reads MVSESHHEALAAPPVTTVATVLPSNATEPASPGEGKEDAFSKLKEKFMNELHKIPLP. A glycan (N-linked (GlcNAc...) asparagine) is linked at Asn-25. A helical membrane pass occupies residues 58 to 80; the sequence is PWALIAIAIVAVLLVLTCCFCIC. S-palmitoyl cysteine attachment occurs at residues Cys-75, Cys-76, Cys-78, Cys-80, and Cys-83. Residues 81-422 lie on the Cytoplasmic side of the membrane; the sequence is KKCLFKKKNK…EVDAMLAVKK (342 aa). The disordered stretch occupies residues 113–142; sequence TMKDQALKDDDAETGLTDGEEKEEPKEEEK. Over residues 122 to 134 the composition is skewed to acidic residues; sequence DDAETGLTDGEEK. Position 129 is a phosphothreonine (Thr-129). The tract at residues 136–382 is phospholipid binding; that stretch reads EPKEEEKLGK…AIGKVFVGYN (247 aa). A C2 1 domain is found at 142 to 261; that stretch reads KLGKLQYSLD…DFGHVTEEWR (120 aa). Ca(2+) contacts are provided by Leu-172, Asp-173, and Asp-179. Residue Tyr-230 is modified to Phosphotyrosine. The Ca(2+) site is built by Asp-231, Phe-232, Asp-233, Ser-236, Lys-237, and Asp-239. Ser-265 is subject to Phosphoserine. Residues 273–406 enclose the C2 2 domain; the sequence is KLGDICFSLR…NPRRPIAQWH (134 aa). Ca(2+) contacts are provided by Asp-304 and Asp-310. Phosphoserine is present on residues Ser-343 and Ser-345. Ca(2+) is bound by residues Asp-364, Asp-366, and Asp-372.

Belongs to the synaptotagmin family. Homotetramer. Heterodimer; heterodimerizes with SYT2 in presence of calcium. Interacts with SCAMP5. Interacts with STON2. Forms a complex with SV2B, syntaxin 1 and SNAP25. Interacts with SV2A, SV2B and SV2C. Interacts with RIMS1. Interacts with PRRT2. Interacts with DNAJC5 in a phosphorylation-dependent manner. Interacts (via N-terminus) with RAB3A. Interacts with SYT12. Interacts with calmodulin. Interacts with DNM1 (via C-terminal proline-rich domain (PRD)); this interaction facilitates vesicle fission during clathrin-mediated endocytosis (CME). Ca(2+) serves as cofactor. Glycosylated. Expressed in melanocytes.

It localises to the cytoplasmic vesicle. The protein resides in the secretory vesicle membrane. It is found in the secretory vesicle. Its subcellular location is the synaptic vesicle membrane. The protein localises to the chromaffin granule membrane. It localises to the cytoplasm. Its function is as follows. Calcium sensor that participates in triggering neurotransmitter release at the synapse. May have a regulatory role in the membrane interactions during trafficking of synaptic vesicles at the active zone of the synapse. It binds acidic phospholipids with a specificity that requires the presence of both an acidic head group and a diacyl backbone. A Ca(2+)-dependent interaction between synaptotagmin and putative receptors for activated protein kinase C has also been reported. It can bind to at least three additional proteins in a Ca(2+)-independent manner; these are neurexins, syntaxin and AP2. Plays a role in dendrite formation by melanocytes. The protein is Synaptotagmin-1 of Homo sapiens (Human).